The following is a 397-amino-acid chain: Tryptophan synthase beta chain (397 aa).

Position 87 is an N6-(pyridoxal phosphate)lysine (lysine 87).

Belongs to the TrpB family. As to quaternary structure, tetramer of two alpha and two beta chains. It depends on pyridoxal 5'-phosphate as a cofactor.

The enzyme catalyses (1S,2R)-1-C-(indol-3-yl)glycerol 3-phosphate + L-serine = D-glyceraldehyde 3-phosphate + L-tryptophan + H2O. It participates in amino-acid biosynthesis; L-tryptophan biosynthesis; L-tryptophan from chorismate: step 5/5. Functionally, the beta subunit is responsible for the synthesis of L-tryptophan from indole and L-serine. In Escherichia coli O157:H7, this protein is Tryptophan synthase beta chain.